The sequence spans 611 residues: Zinc metalloproteinase-disintegrin-like ohanin (611 aa).

Residues 1–20 (MIQVLLVTICLVVFPYQGSS) form the signal peptide. A propeptide spanning residues 21–187 (IILESGKVND…WESDEPIEKI (167 aa)) is cleaved from the precursor. In terms of domain architecture, Peptidase M12B spans 198 to 393 (KYLELYIVAD…DTPQCLINKP (196 aa)). 2 N-linked (GlcNAc...) asparagine glycosylation sites follow: Asn-217 and Asn-260. 3 disulfides stabilise this stretch: Cys-307–Cys-388, Cys-347–Cys-372, and Cys-349–Cys-354. Residue His-332 coordinates Zn(2+). Residue Glu-333 is part of the active site. Zn(2+) is bound by residues His-336 and His-342. A glycan (N-linked (GlcNAc...) asparagine) is linked at Asn-395. Residues 401-487 (NAVCGNYVEE…ECPMDRFHKN (87 aa)) form the Disintegrin domain. 14 disulfide bridges follow: Cys-404-Cys-433, Cys-415-Cys-428, Cys-417-Cys-423, Cys-427-Cys-450, Cys-441-Cys-447, Cys-446-Cys-472, Cys-459-Cys-479, Cys-466-Cys-498, Cys-491-Cys-503, Cys-510-Cys-560, Cys-525-Cys-578, Cys-538-Cys-548, Cys-555-Cys-603, and Cys-597-Cys-608. A D/ECD-tripeptide motif is present at residues 465-467 (ECD). N-linked (GlcNAc...) asparagine glycosylation is present at Asn-528.

It belongs to the venom metalloproteinase (M12B) family. P-III subfamily. P-IIIa sub-subfamily. Monomer. Requires Zn(2+) as cofactor. In terms of tissue distribution, expressed by the venom gland.

The protein resides in the secreted. Its activity is regulated as follows. Inhibited by EDTA, but not by PMSF. Snake venom zinc metalloproteinase that has hemorrhagic activity. Inhibits ADP-, TMVA- and stejnulxin-induced platelet aggregation in a dose-dependent manner (on washed platelet, but not on platelet rich plasm). Also specifically degrades alpha-chain of fibrinogen (FGA). The protein is Zinc metalloproteinase-disintegrin-like ohanin of Ophiophagus hannah (King cobra).